Here is a 376-residue protein sequence, read N- to C-terminus: Enoyl-[acyl-carrier-protein] reductase, mitochondrial (376 aa).

The Proton donor role is filled by tyrosine 72. NADP(+) is bound by residues asparagine 154, 182–185 (TSAV), 205–207 (RDR), 280–283 (YGGM), 305–307 (YWI), and lysine 369.

It belongs to the zinc-containing alcohol dehydrogenase family. Quinone oxidoreductase subfamily. Homodimer.

It is found in the mitochondrion matrix. It carries out the reaction a 2,3-saturated acyl-[ACP] + NADP(+) = a (2E)-enoyl-[ACP] + NADPH + H(+). In terms of biological role, catalyzes the NADPH-dependent reduction of trans-2-enoyl thioesters in mitochondrial fatty acid synthesis (fatty acid synthesis type II). Fatty acid chain elongation in mitochondria uses acyl carrier protein (ACP) as an acyl group carrier, but the enzyme accepts both ACP and CoA thioesters as substrates in vitro. Required for respiration and the maintenance of the mitochondrial compartment. This chain is Enoyl-[acyl-carrier-protein] reductase, mitochondrial (ETR1), found in Eremothecium gossypii (strain ATCC 10895 / CBS 109.51 / FGSC 9923 / NRRL Y-1056) (Yeast).